The sequence spans 553 residues: Ubiquitin carboxyl-terminal hydrolase 17-like protein 15 (553 aa).

The region spanning alanine 80–lysine 375 is the USP domain. Catalysis depends on cysteine 89, which acts as the Nucleophile. The Proton acceptor role is filled by histidine 334. Composition is skewed to basic and acidic residues over residues serine 382–arginine 392 and aspartate 398–proline 413. Disordered regions lie at residues serine 382–proline 413 and serine 491–arginine 524. The span at histidine 496–leucine 505 shows a compositional bias: polar residues. The span at glycine 510–arginine 524 shows a compositional bias: basic residues.

It belongs to the peptidase C19 family. USP17 subfamily.

Its subcellular location is the nucleus. The protein resides in the endoplasmic reticulum. It carries out the reaction Thiol-dependent hydrolysis of ester, thioester, amide, peptide and isopeptide bonds formed by the C-terminal Gly of ubiquitin (a 76-residue protein attached to proteins as an intracellular targeting signal).. Deubiquitinating enzyme that removes conjugated ubiquitin from specific proteins to regulate different cellular processes that may include cell proliferation, progression through the cell cycle, apoptosis, cell migration, and the cellular response to viral infection. The polypeptide is Ubiquitin carboxyl-terminal hydrolase 17-like protein 15 (USP17L15) (Homo sapiens (Human)).